The primary structure comprises 130 residues: Large ribosomal subunit protein bL17 (130 aa).

Belongs to the bacterial ribosomal protein bL17 family. As to quaternary structure, part of the 50S ribosomal subunit. Contacts protein L32.

This Photorhabdus laumondii subsp. laumondii (strain DSM 15139 / CIP 105565 / TT01) (Photorhabdus luminescens subsp. laumondii) protein is Large ribosomal subunit protein bL17.